The chain runs to 430 residues: Serine--tRNA ligase (430 aa).

L-serine is bound at residue 231-233 (TSE). Residue 262–264 (RSE) participates in ATP binding. E285 is an L-serine binding site. Position 349 to 352 (349 to 352 (EISS)) interacts with ATP. S385 contributes to the L-serine binding site.

It belongs to the class-II aminoacyl-tRNA synthetase family. Type-1 seryl-tRNA synthetase subfamily. Homodimer. The tRNA molecule binds across the dimer.

It is found in the cytoplasm. It carries out the reaction tRNA(Ser) + L-serine + ATP = L-seryl-tRNA(Ser) + AMP + diphosphate + H(+). It catalyses the reaction tRNA(Sec) + L-serine + ATP = L-seryl-tRNA(Sec) + AMP + diphosphate + H(+). Its pathway is aminoacyl-tRNA biosynthesis; selenocysteinyl-tRNA(Sec) biosynthesis; L-seryl-tRNA(Sec) from L-serine and tRNA(Sec): step 1/1. Functionally, catalyzes the attachment of serine to tRNA(Ser). Is also able to aminoacylate tRNA(Sec) with serine, to form the misacylated tRNA L-seryl-tRNA(Sec), which will be further converted into selenocysteinyl-tRNA(Sec). In Roseobacter denitrificans (strain ATCC 33942 / OCh 114) (Erythrobacter sp. (strain OCh 114)), this protein is Serine--tRNA ligase.